We begin with the raw amino-acid sequence, 1108 residues long: Receptor-type guanylate cyclase gcy-20 (1108 aa).

Positions 1 to 15 are cleaved as a signal peptide; the sequence is MRILLLLLQNILVFC. Topologically, residues 16–474 are extracellular; it reads QFLQTIKVGL…ECPADFVKEY (459 aa). Asn-66, Asn-131, Asn-319, Asn-341, Asn-366, and Asn-380 each carry an N-linked (GlcNAc...) asparagine glycan. A helical membrane pass occupies residues 475 to 495; that stretch reads LVYTIIAAFIVILALLAGCAG. The 321-residue stretch at 483–803 folds into the Protein kinase domain; sequence FIVILALLAG…IEQVRSHLNG (321 aa). ATP is bound by residues 489–497 and Lys-571; that span reads LLAGCAGLL. Residues 496–1108 are Cytoplasmic-facing; sequence LLYTMHMKRK…QAGDNNSETV (613 aa). The Guanylate cyclase domain occupies 876–1006; sequence TIFFSDVVQF…DAVNTASRME (131 aa). The segment at 1083-1108 is disordered; the sequence is LEKNAEGSETSSLSVDQAGDNNSETV. The segment covering 1089-1108 has biased composition (polar residues); that stretch reads GSETSSLSVDQAGDNNSETV.

Belongs to the adenylyl cyclase class-4/guanylyl cyclase family. As to expression, expressed asymmetrically in ASE left (ASEL) sensory neuron. Expressed in excretory gland and canal cell.

The protein localises to the cell membrane. The enzyme catalyses GTP = 3',5'-cyclic GMP + diphosphate. Its function is as follows. Guanylate cyclase involved in the production of the second messenger cGMP. The polypeptide is Receptor-type guanylate cyclase gcy-20 (Caenorhabditis elegans).